Consider the following 517-residue polypeptide: MAALGPSSQNVTEYVVRVPKNTTKKYNIMAFNAADKVNLTTWNQARLERDLSNKKIYQEEEMPESGAGSEFNRKLREEARRKKYGIVLKEFRPEDQPWLLRVNGKSGRKFKGIKKGGVTENTSYYIFTQCPDGAFEAFPVHNWYNFTPLAKHRTLTAEEAEEEWERRNKVLNHFSIMQQRRLKDQDQDEEDEEKEKRSRKKASELRIHDLEDDLEMSSDDSEASGEEGGRAPKAKKKAPPSKGGRKKKKKKGSDDEAFEDSDDGDFEGQEVDYMSDGSSSSQDELEGKPKATQQEEGPKGVDEQSESSEESEEEKPPEEDKEEEEEKKAPTPQEKKRRKDSSEESDSSEESDIDSEASSALFMAKKKTPPKRERKPSGGSSRGNSRPGTPSTEAGSTSSTLRAAASKLEQGKRTSETPAAKRLRLDTGPQSLSGKSTPQPQSGKSTPSSGDVQVTEDAVRRYLTRKPMTTKDLLKKFQTKKTGLSSEQTVNVLAQILKRLNPERKMINDKMHFSLKE.

N-acetylalanine is present on Ala-2. Thr-156 is subject to Phosphothreonine. A disordered region spans residues 178–458 (QQRRLKDQDQ…SGDVQVTEDA (281 aa)). The segment covering 210-225 (LEDDLEMSSDDSEASG) has biased composition (acidic residues). Ser-217, Ser-218, Ser-221, and Ser-224 each carry phosphoserine. Positions 232–251 (PKAKKKAPPSKGGRKKKKKK) are enriched in basic residues. Composition is skewed to acidic residues over residues 255 to 270 (DEAF…EGQE) and 303 to 325 (EQSE…EEEE). At Thr-331 the chain carries Phosphothreonine. Acidic residues predominate over residues 343–355 (EESDSSEESDIDS). Residues 364 to 374 (AKKKTPPKRER) are compositionally biased toward basic residues. Ser-377, Ser-380, Ser-381, and Ser-385 each carry phosphoserine. Low complexity predominate over residues 377-391 (SGGSSRGNSRPGTPS). The residue at position 389 (Thr-389) is a Phosphothreonine. Ser-391 is subject to Phosphoserine. The span at 392 to 401 (TEAGSTSSTL) shows a compositional bias: polar residues. Lys-407 carries the N6-acetyllysine modification. Polar residues predominate over residues 428 to 452 (GPQSLSGKSTPQPQSGKSTPSSGDV). Residues Ser-431, Ser-433, and Ser-436 each carry the phosphoserine modification. A phosphothreonine mark is found at Thr-437 and Thr-446. Ser-449 is subject to Phosphoserine.

This sequence belongs to the TFIIF alpha subunit family. In terms of assembly, heterodimer of an alpha and a beta subunit. Interacts with GTF2F2, CTDP1, TAF6/TAFII80 and URI1. Interacts with GTF2B (via C-terminus and preferentially via acetylated form); this interaction prevents binding of GTF2B to GTF2F2. Part of TBP-based Pol II pre-initiation complex (PIC), in which Pol II core assembles with general transcription factors and other specific initiation factors including GTF2E1, GTF2E2, GTF2F1, GTF2F2, TCEA1, ERCC2, ERCC3, GTF2H2, GTF2H3, GTF2H4, GTF2H5, GTF2A1, GTF2A2, GTF2B and TBP; this large multi-subunit PIC complex mediates DNA unwinding and targets Pol II core to the transcription start site where the first phosphodiester bond forms. Post-translationally, phosphorylated on Ser and other residues by TAF1 and casein kinase II-like kinases.

Its subcellular location is the nucleus. TFIIF is a general transcription initiation factor that binds to RNA polymerase II and helps to recruit it to the initiation complex in collaboration with TFIIB. It promotes transcription elongation. In Bos taurus (Bovine), this protein is General transcription factor IIF subunit 1 (GTF2F1).